The following is a 118-amino-acid chain: Large ribosomal subunit protein bL20 (118 aa).

Belongs to the bacterial ribosomal protein bL20 family.

Its function is as follows. Binds directly to 23S ribosomal RNA and is necessary for the in vitro assembly process of the 50S ribosomal subunit. It is not involved in the protein synthesizing functions of that subunit. The chain is Large ribosomal subunit protein bL20 from Lactobacillus delbrueckii subsp. bulgaricus (strain ATCC BAA-365 / Lb-18).